The following is a 109-amino-acid chain: Cell division protein FtsL (109 aa).

Residues 1 to 3 (MSR) lie on the Cytoplasmic side of the membrane. A helical membrane pass occupies residues 4 to 21 (LNIFLLIIVMGCALSVVN). Residues 22–109 (STNQQRQIFI…ASAAPTGGAR (88 aa)) are Periplasmic-facing.

The protein belongs to the FtsL family. As to quaternary structure, part of a complex composed of FtsB, FtsL and FtsQ.

It is found in the cell inner membrane. Functionally, essential cell division protein. May link together the upstream cell division proteins, which are predominantly cytoplasmic, with the downstream cell division proteins, which are predominantly periplasmic. In Burkholderia pseudomallei (strain K96243), this protein is Cell division protein FtsL.